Reading from the N-terminus, the 1004-residue chain is DNA-directed RNA polymerase subunit beta' (1004 aa).

Positions 388, 390, and 392 each coordinate Mg(2+). Zn(2+) contacts are provided by Cys757, Cys831, Cys838, and Cys841.

Belongs to the RNA polymerase beta' chain family. In terms of assembly, the RNAP catalytic core consists of 2 alpha, 1 beta, 1 beta' and 1 omega subunit. When a sigma factor is associated with the core the holoenzyme is formed, which can initiate transcription. The cofactor is Mg(2+). Zn(2+) is required as a cofactor.

It carries out the reaction RNA(n) + a ribonucleoside 5'-triphosphate = RNA(n+1) + diphosphate. Functionally, DNA-dependent RNA polymerase catalyzes the transcription of DNA into RNA using the four ribonucleoside triphosphates as substrates. In Oenococcus oeni (Leuconostoc oenos), this protein is DNA-directed RNA polymerase subunit beta'.